Consider the following 514-residue polypeptide: Peptide chain release factor 3 (514 aa).

Residues 8–268 (KKRRTFAIIS…TFLKFAPEPH (261 aa)) form the tr-type G domain. GTP-binding positions include 17-24 (SHPDAGKT), 85-89 (DTPGH), and 139-142 (NKLD).

It belongs to the TRAFAC class translation factor GTPase superfamily. Classic translation factor GTPase family. PrfC subfamily.

It localises to the cytoplasm. In terms of biological role, increases the formation of ribosomal termination complexes and stimulates activities of RF-1 and RF-2. It binds guanine nucleotides and has strong preference for UGA stop codons. It may interact directly with the ribosome. The stimulation of RF-1 and RF-2 is significantly reduced by GTP and GDP, but not by GMP. This chain is Peptide chain release factor 3, found in Streptococcus thermophilus (strain CNRZ 1066).